Consider the following 201-residue polypeptide: Adenylyl-sulfate kinase (201 aa).

The tract at residues 1–23 (MALHDENVVWHSHPVTPQQREQH) is disordered. Position 35–42 (35–42 (GLSGSGKS)) interacts with ATP. Ser109 functions as the Phosphoserine intermediate in the catalytic mechanism.

Belongs to the APS kinase family.

It catalyses the reaction adenosine 5'-phosphosulfate + ATP = 3'-phosphoadenylyl sulfate + ADP + H(+). It participates in sulfur metabolism; hydrogen sulfide biosynthesis; sulfite from sulfate: step 2/3. Its function is as follows. Catalyzes the synthesis of activated sulfate. This chain is Adenylyl-sulfate kinase, found in Escherichia coli O6:K15:H31 (strain 536 / UPEC).